Reading from the N-terminus, the 458-residue chain is Siroheme synthase (458 aa).

Residues 1-203 (MDYLPLFFDL…GNLAAAEQLI (203 aa)) form a precorrin-2 dehydrogenase /sirohydrochlorin ferrochelatase region. Residues 22–23 (TI) and 43–44 (PK) contribute to the NAD(+) site. Position 128 is a phosphoserine (Ser-128). The segment at 216 to 458 (GEVYLVGAGP…RCHEKLNWYK (243 aa)) is uroporphyrinogen-III C-methyltransferase. Position 225 (Pro-225) interacts with S-adenosyl-L-methionine. Asp-248 serves as the catalytic Proton acceptor. Lys-270 serves as the catalytic Proton donor. Residues 301-303 (GGD), Ile-306, 331-332 (TA), Met-383, and Gly-412 contribute to the S-adenosyl-L-methionine site.

This sequence in the N-terminal section; belongs to the precorrin-2 dehydrogenase / sirohydrochlorin ferrochelatase family. In the C-terminal section; belongs to the precorrin methyltransferase family.

The enzyme catalyses uroporphyrinogen III + 2 S-adenosyl-L-methionine = precorrin-2 + 2 S-adenosyl-L-homocysteine + H(+). The catalysed reaction is precorrin-2 + NAD(+) = sirohydrochlorin + NADH + 2 H(+). It catalyses the reaction siroheme + 2 H(+) = sirohydrochlorin + Fe(2+). It participates in cofactor biosynthesis; adenosylcobalamin biosynthesis; precorrin-2 from uroporphyrinogen III: step 1/1. It functions in the pathway cofactor biosynthesis; adenosylcobalamin biosynthesis; sirohydrochlorin from precorrin-2: step 1/1. Its pathway is porphyrin-containing compound metabolism; siroheme biosynthesis; precorrin-2 from uroporphyrinogen III: step 1/1. The protein operates within porphyrin-containing compound metabolism; siroheme biosynthesis; siroheme from sirohydrochlorin: step 1/1. It participates in porphyrin-containing compound metabolism; siroheme biosynthesis; sirohydrochlorin from precorrin-2: step 1/1. Its function is as follows. Multifunctional enzyme that catalyzes the SAM-dependent methylations of uroporphyrinogen III at position C-2 and C-7 to form precorrin-2 via precorrin-1. Then it catalyzes the NAD-dependent ring dehydrogenation of precorrin-2 to yield sirohydrochlorin. Finally, it catalyzes the ferrochelation of sirohydrochlorin to yield siroheme. This is Siroheme synthase from Saccharophagus degradans (strain 2-40 / ATCC 43961 / DSM 17024).